The chain runs to 173 residues: Crossover junction endodeoxyribonuclease RuvC (173 aa).

Residues aspartate 8, glutamate 67, and aspartate 139 contribute to the active site. Residues aspartate 8, glutamate 67, and aspartate 139 each contribute to the Mg(2+) site.

It belongs to the RuvC family. In terms of assembly, homodimer which binds Holliday junction (HJ) DNA. The HJ becomes 2-fold symmetrical on binding to RuvC with unstacked arms; it has a different conformation from HJ DNA in complex with RuvA. In the full resolvosome a probable DNA-RuvA(4)-RuvB(12)-RuvC(2) complex forms which resolves the HJ. Mg(2+) serves as cofactor.

The protein localises to the cytoplasm. It carries out the reaction Endonucleolytic cleavage at a junction such as a reciprocal single-stranded crossover between two homologous DNA duplexes (Holliday junction).. Its function is as follows. The RuvA-RuvB-RuvC complex processes Holliday junction (HJ) DNA during genetic recombination and DNA repair. Endonuclease that resolves HJ intermediates. Cleaves cruciform DNA by making single-stranded nicks across the HJ at symmetrical positions within the homologous arms, yielding a 5'-phosphate and a 3'-hydroxyl group; requires a central core of homology in the junction. The consensus cleavage sequence is 5'-(A/T)TT(C/G)-3'. Cleavage occurs on the 3'-side of the TT dinucleotide at the point of strand exchange. HJ branch migration catalyzed by RuvA-RuvB allows RuvC to scan DNA until it finds its consensus sequence, where it cleaves and resolves the cruciform DNA. The chain is Crossover junction endodeoxyribonuclease RuvC from Shewanella piezotolerans (strain WP3 / JCM 13877).